We begin with the raw amino-acid sequence, 757 residues long: MDVNPTLLFLKVPVQNAISTTFPYTGDPPYSHGTGTGYTMDTVNRTHQYSEKGKWTTNTETGAPQLNPIDGPLPEDNEPSGYAQTDCVLEAMAFLEESHPGIFENSCLETMEIVQQTRVDKLTQGRQTYDWTLNRNQPAATALANTIEIFRSNGLTASESGRLIDFLKDVMESMDKEEMEITTHFQRKRRVRDNMTKKMVTQRTIGKKKQRLNKKSYLIRALTLNTMTKDAERGKLKRRAIATPGMQIRGFVYFVETLARSICEKLEQSGLPVGGNEKKAKLANVVRKMMTNSQDTELSFTITGDNTKWNENQNPRMFLAMITYITRNQPEWFRNVLSIAPIMFSNKMARLGKGYMFESKSMKLRTQIPAEMLANIDLKYFNELTKKKIEKIRPLLIDGTASLSPGMMMGMFNMLSTVLGVSILNLGQKRYTKTTYWWDGLQSSDDFALIVNAPNHEGIQAGVDRFYRTCKLVGINMSKKKSYINRTGTFEFTSFFYRYGFVANFSMELPSFGVSGINESADMSIGVTVIKNNMINNDLGPATAQMALQLFIKDYRYTYRCHRGDTQIQTRRSFELKKLWEQTRSKAGLLVSDGGPNLYNIRNLHIPEVCLKWELMDEDYQGRLCNPLNPFVSHKEIESVNNAVVMPAHGPAKSMEYDAVATTHSWIPKRNRSILNTSQRGILEDEQMYQKCCNLFEKFFPSSSYRRPVGISSMVEAMVSRARIDARIDFESGRIKKEEFAEIMKICSTIEELRRQK.

Residues 52–82 (KGKWTTNTETGAPQLNPIDGPLPEDNEPSGY) are disordered. The span at 55–64 (WTTNTETGAP) shows a compositional bias: polar residues. Short sequence motifs (nuclear localization signal) lie at residues 187–195 (RKRRVRDNM) and 203–216 (RTIGKKKQRLNKKS). The segment at 249–256 (RGFVYFVE) is promoter-binding site. The region spanning 286–483 (VRKMMTNSQD…GINMSKKKSY (198 aa)) is the RdRp catalytic domain.

It belongs to the influenza viruses polymerase PB1 family. In terms of assembly, influenza RNA polymerase is composed of three subunits: PB1, PB2 and PA. Interacts (via N-terminus) with PA (via C-terminus). Interacts (via C-terminus) with PB2 (via N-terminus); this interaction is essential for transcription initiation. Post-translationally, phosphorylated by host PRKCA.

Its subcellular location is the host nucleus. It is found in the host cytoplasm. It catalyses the reaction RNA(n) + a ribonucleoside 5'-triphosphate = RNA(n+1) + diphosphate. In terms of biological role, RNA-dependent RNA polymerase which is responsible for replication and transcription of virus RNA segments. The transcription of viral mRNAs occurs by a unique mechanism called cap-snatching. 5' methylated caps of cellular mRNAs are cleaved after 10-13 nucleotides by PA. In turn, these short capped RNAs are used as primers by PB1 for transcription of viral mRNAs. During virus replication, PB1 initiates RNA synthesis and copy vRNA into complementary RNA (cRNA) which in turn serves as a template for the production of more vRNAs. This is RNA-directed RNA polymerase catalytic subunit from Aves (Cat).